A 1135-amino-acid polypeptide reads, in one-letter code: Putative beta-hexosaminidase (1135 aa).

A signal peptide spans 1–23; that stretch reads MKWVKSGVGILGILLTICHAVTS. Disordered regions lie at residues 970 to 1082 and 1107 to 1135; these read AHPP…LPGQ and QMRG…QQAG. Over residues 986-1003 the composition is skewed to pro residues; sequence NMPPPFPPRPPFGPPMLP. Composition is skewed to low complexity over residues 1004–1026 and 1043–1073; these read PGQM…TALG and TGQA…LPGQ.

The protein belongs to the glycosyl hydrolase 20 family. As to expression, prismatic layer of shell (at protein level). Expressed primarily in the mantle with highest level in the mantle edge and lower level in the mantle pallium.

The protein resides in the secreted. The catalysed reaction is Hydrolysis of terminal non-reducing N-acetyl-D-hexosamine residues in N-acetyl-beta-D-hexosaminides.. It functions in the pathway glycan degradation; chitin degradation. This chain is Putative beta-hexosaminidase, found in Margaritifera margaritifera (Freshwater pearl mussel).